A 410-amino-acid chain; its full sequence is MILFAIDYLERVWTLKVPSVFSYYSTRMILAAITSLLLSIFLGPYFIRKLYELKIGQSIRKEDCPLLGQLHEKKQNTPTMGGILILSSMLVSLVLWMDLTHIFTLILFVTTVFLGLIGGRDDYLKLKYKNTKGMSARGKLFFQFVLSAAIASYFLLSSVNEMFEKWTWFQPPVIKEQIVVKNSETLQEMPSQTKSISLKEYASRLYIPFFKEPVVTFGGISLILMAFFIFFVITGSSNAANLTDGLDGLLAGCLVTAAGSLCLIAFVSNHVDIARYLNILYIEGSGEIAIYLCALIGASLGFLWYNGYPAQVFMGDTGSLTLGGILGVSAVLLRREFLLGIVGGIFVAEALSVILQVASYRLRNKKRIFLCAPLHHHFEYKGWPETKVVIRFWIMSLLFAIIGIASLKFQ.

10 helical membrane-spanning segments follow: residues 27–47 (RMIL…PYFI), 77–97 (TPTM…VLWM), 99–119 (LTHI…LIGG), 140–160 (LFFQ…SSVN), 213–233 (PVVT…FFVI), 248–268 (GLLA…AFVS), 288–308 (IAIY…YNGY), 312–332 (VFMG…SAVL), 337–357 (FLLG…ILQV), and 389–409 (VIRF…SLKF).

This sequence belongs to the glycosyltransferase 4 family. MraY subfamily. It depends on Mg(2+) as a cofactor.

It is found in the cell inner membrane. The enzyme catalyses UDP-N-acetyl-alpha-D-muramoyl-L-alanyl-gamma-D-glutamyl-meso-2,6-diaminopimeloyl-D-alanyl-D-alanine + di-trans,octa-cis-undecaprenyl phosphate = di-trans,octa-cis-undecaprenyl diphospho-N-acetyl-alpha-D-muramoyl-L-alanyl-D-glutamyl-meso-2,6-diaminopimeloyl-D-alanyl-D-alanine + UMP. Its pathway is cell wall biogenesis; peptidoglycan biosynthesis. In terms of biological role, catalyzes the initial step of the lipid cycle reactions in the biosynthesis of the cell wall peptidoglycan: transfers peptidoglycan precursor phospho-MurNAc-pentapeptide from UDP-MurNAc-pentapeptide onto the lipid carrier undecaprenyl phosphate, yielding undecaprenyl-pyrophosphoryl-MurNAc-pentapeptide, known as lipid I. This Protochlamydia amoebophila (strain UWE25) protein is Phospho-N-acetylmuramoyl-pentapeptide-transferase.